Consider the following 552-residue polypeptide: Acyl-CoA synthetase FUM10 (552 aa).

183–194 (ELFTSGTTGAPK) is a binding site for AMP. The segment at 463–536 (EIEHVARLHD…QEIPYNRTGK (74 aa)) is AMP-binding.

Belongs to the ATP-dependent AMP-binding enzyme family.

Its pathway is mycotoxin biosynthesis. In terms of biological role, acyl-CoA synthetase; part of the gene cluster that mediates the biosynthesis of fumonisins B1 (FB1), B2 (FB2), B3 (FB3), and B4 (FB4), which are carcinogenic mycotoxins. Within the pathway, FUM10 is involved the addition of the tricarballylic moieties to the carbon backbone. FUM10 catalyzes the CoA activation of citrate to form tricarballylic acid. The biosynthesis starts with the FUM1-catalyzed carbon chain assembly from one molecule of acetyl-CoA, eight molecules of malonyl-CoA, and two molecules of methionine (in S-adenosyl form). The C18 polyketide chain is released from the enzyme by a nucleophilic attack of a carbanion, which is derived from R-carbon of alanine by decarboxylation, on the carbonyl carbon of polyketide acyl chain. This step is catalyzed by the pyridoxal 5'-phosphate-dependent aminoacyl transferase FUM8. The resultant 3-keto intermediate is then stereospecifically reduced to a 3-hydroxyl product by reductase FUM13. Subsequent oxidations at C-10 by the cytochrome P450 monooxygenase FUM2, C-14 and C-15 by FUM6, FUM12 or FUM15, tricarballylic esterification of the hydroxyl groups on C-14 and C-15 by acyltransferase FUM14, and C-5 hydroxylation by 2-keto-glutarate-dependent dioxygenase FUM3 furnish the biosynthesis of fumonisins. The tricarballylic moieties are most likely derived from the citric acid cycle, and their addition to the carbon backbone may involve FUM7, FUM10, FUM11 and FUM14. This chain is Acyl-CoA synthetase FUM10, found in Gibberella moniliformis (strain M3125 / FGSC 7600) (Maize ear and stalk rot fungus).